A 106-amino-acid polypeptide reads, in one-letter code: Minor capsid protein VP2 (106 aa).

This sequence belongs to the vesivirus VP2 protein family. In terms of assembly, homooligomer. The portal-like structure consists in 12 copies of VP2. Interacts with capsid protein VP1.

The protein localises to the virion. Its subcellular location is the host cytoplasm. Its function is as follows. Minor structural protein that forms a portal-like structure at a unique three-fold axis of symmetry, following binding to the host receptor. The virion attaches to feline junctional adhesion molecule A (F11R). Once attached, the virion is endocytosed. Acidification of the endosome induces conformational change of capsid protein thereby injecting virus genomic RNA into host cytoplasm. The channel formed by VP2 may allow the delivery of the viral genome through the host endosomal membrane. The protein is Minor capsid protein VP2 of Feline calicivirus (strain Cat/United States/Urbana/1960) (FCV).